Reading from the N-terminus, the 571-residue chain is Proline--tRNA ligase (571 aa).

The protein belongs to the class-II aminoacyl-tRNA synthetase family. ProS type 1 subfamily. As to quaternary structure, homodimer.

Its subcellular location is the cytoplasm. The enzyme catalyses tRNA(Pro) + L-proline + ATP = L-prolyl-tRNA(Pro) + AMP + diphosphate. Its function is as follows. Catalyzes the attachment of proline to tRNA(Pro) in a two-step reaction: proline is first activated by ATP to form Pro-AMP and then transferred to the acceptor end of tRNA(Pro). As ProRS can inadvertently accommodate and process non-cognate amino acids such as alanine and cysteine, to avoid such errors it has two additional distinct editing activities against alanine. One activity is designated as 'pretransfer' editing and involves the tRNA(Pro)-independent hydrolysis of activated Ala-AMP. The other activity is designated 'posttransfer' editing and involves deacylation of mischarged Ala-tRNA(Pro). The misacylated Cys-tRNA(Pro) is not edited by ProRS. This Vibrio campbellii (strain ATCC BAA-1116) protein is Proline--tRNA ligase.